A 144-amino-acid chain; its full sequence is Large ribosomal subunit protein uL13 (144 aa).

This sequence belongs to the universal ribosomal protein uL13 family. Part of the 50S ribosomal subunit.

Its function is as follows. This protein is one of the early assembly proteins of the 50S ribosomal subunit, although it is not seen to bind rRNA by itself. It is important during the early stages of 50S assembly. In Blochmanniella pennsylvanica (strain BPEN), this protein is Large ribosomal subunit protein uL13.